A 420-amino-acid chain; its full sequence is Na(+)/H(+) antiporter NhaA (420 aa).

Transmembrane regions (helical) follow at residues 34 to 54 (TTGGMLMLAATVAALLWANLG), 69 to 89 (LTIEQWAADGLLTVFFFIAGL), 107 to 127 (LVPIVAAVCGMVFPAGIYTLF), 141 to 161 (IPMATDIAFALAVLAIVGAGL), 168 to 190 (FLLTLAIADDLGSIIVIAVFFST), 194 to 213 (IWWLAGAIACIGLWGVMQHF), 271 to 291 (WSAGVVVPFFALMSAGVHVSG), 301 to 321 (PISLGIVCGLILGKVIGITLG), 342 to 362 (IIAVAVLAGIGFTVSMLMTDL), and 374 to 394 (AKASVLMASFLAAILGGAMLH).

It belongs to the NhaA Na(+)/H(+) (TC 2.A.33) antiporter family.

The protein localises to the cell membrane. It carries out the reaction Na(+)(in) + 2 H(+)(out) = Na(+)(out) + 2 H(+)(in). Its function is as follows. Na(+)/H(+) antiporter that extrudes sodium in exchange for external protons. The polypeptide is Na(+)/H(+) antiporter NhaA (Cutibacterium acnes (strain DSM 16379 / KPA171202) (Propionibacterium acnes)).